Consider the following 780-residue polypeptide: APC membrane recruitment protein 3 (780 aa).

Residues 20–32 show a composition bias toward basic and acidic residues; sequence KLIDSPAKEDPDK. Disordered stretches follow at residues 20–59, 341–407, 547–569, 582–617, 635–659, 706–729, and 749–780; these read KLIDSPAKEDPDKWPLSLGEQQRAYGEKSSQTSPCSQGYG, ELPL…FPRD, KGREDQATTCFPPSRQEPWAHSG, GEPARGSKTPSKDDSLEEGTQDFSEGQSSSEATMTS, KELGTPGNLRYSQGPLRPGHRGSAL, KNPISSKPNEAAGCGLSSSASPQD, and LGPQACSSVDSQPQQLCPRAPEQVPHRGSVGS. Over residues 354 to 376 the composition is skewed to polar residues; sequence SKASSIDTGTPKSEQPESVSTSD. Positions 602 to 617 are enriched in polar residues; sequence QDFSEGQSSSEATMTS. Polar residues predominate over residues 753-763; that stretch reads ACSSVDSQPQQ.

Belongs to the Amer family.

Its subcellular location is the cell membrane. Functionally, regulator of the canonical Wnt signaling pathway. Acts by specifically binding phosphatidylinositol 4,5-bisphosphate (PtdIns(4,5)P2), translocating to the cell membrane. This chain is APC membrane recruitment protein 3 (Amer3), found in Mus musculus (Mouse).